A 219-amino-acid polypeptide reads, in one-letter code: Protein-L-isoaspartate O-methyltransferase 2 (219 aa).

Serine 67 is a catalytic residue.

This sequence belongs to the methyltransferase superfamily. L-isoaspartyl/D-aspartyl protein methyltransferase family.

Its subcellular location is the cytoplasm. It catalyses the reaction [protein]-L-isoaspartate + S-adenosyl-L-methionine = [protein]-L-isoaspartate alpha-methyl ester + S-adenosyl-L-homocysteine. Catalyzes the methyl esterification of L-isoaspartyl residues in peptides and proteins that result from spontaneous decomposition of normal L-aspartyl and L-asparaginyl residues. It plays a role in the repair and/or degradation of damaged proteins. The sequence is that of Protein-L-isoaspartate O-methyltransferase 2 from Nitrosococcus oceani (strain ATCC 19707 / BCRC 17464 / JCM 30415 / NCIMB 11848 / C-107).